Consider the following 392-residue polypeptide: Galactokinase (392 aa).

40 to 43 (EHID) provides a ligand contact to substrate. ATP contacts are provided by residues Ser-74 and 128–134 (GSGLSSS). The Mg(2+) site is built by Ser-134 and Glu-167. Asp-179 functions as the Proton acceptor in the catalytic mechanism. Position 229 (Tyr-229) interacts with substrate.

This sequence belongs to the GHMP kinase family. GalK subfamily.

It is found in the cytoplasm. The enzyme catalyses alpha-D-galactose + ATP = alpha-D-galactose 1-phosphate + ADP + H(+). It participates in carbohydrate metabolism; galactose metabolism. In terms of biological role, catalyzes the transfer of the gamma-phosphate of ATP to D-galactose to form alpha-D-galactose-1-phosphate (Gal-1-P). The protein is Galactokinase of Clostridium tetani (strain Massachusetts / E88).